The chain runs to 131 residues: UPF0102 protein YraN (131 aa).

Belongs to the UPF0102 family.

This chain is UPF0102 protein YraN, found in Salmonella typhi.